The primary structure comprises 139 residues: ATP synthase epsilon chain (139 aa).

It belongs to the ATPase epsilon chain family. F-type ATPases have 2 components, CF(1) - the catalytic core - and CF(0) - the membrane proton channel. CF(1) has five subunits: alpha(3), beta(3), gamma(1), delta(1), epsilon(1). CF(0) has three main subunits: a, b and c.

It is found in the cell inner membrane. In terms of biological role, produces ATP from ADP in the presence of a proton gradient across the membrane. The protein is ATP synthase epsilon chain of Pseudomonas syringae pv. tomato (strain ATCC BAA-871 / DC3000).